The sequence spans 439 residues: tRNA-2-methylthio-N(6)-dimethylallyladenosine synthase (439 aa).

The MTTase N-terminal domain maps to Met1 to Asn117. Cys10, Cys46, Cys80, Cys153, Cys157, and Cys160 together coordinate [4Fe-4S] cluster. In terms of domain architecture, Radical SAM core spans Pro139–Glu371. One can recognise a TRAM domain in the interval Asn369–Asn436.

Belongs to the methylthiotransferase family. MiaB subfamily. Monomer. [4Fe-4S] cluster is required as a cofactor.

It localises to the cytoplasm. It carries out the reaction N(6)-dimethylallyladenosine(37) in tRNA + (sulfur carrier)-SH + AH2 + 2 S-adenosyl-L-methionine = 2-methylsulfanyl-N(6)-dimethylallyladenosine(37) in tRNA + (sulfur carrier)-H + 5'-deoxyadenosine + L-methionine + A + S-adenosyl-L-homocysteine + 2 H(+). Its function is as follows. Catalyzes the methylthiolation of N6-(dimethylallyl)adenosine (i(6)A), leading to the formation of 2-methylthio-N6-(dimethylallyl)adenosine (ms(2)i(6)A) at position 37 in tRNAs that read codons beginning with uridine. The sequence is that of tRNA-2-methylthio-N(6)-dimethylallyladenosine synthase from Petrotoga mobilis (strain DSM 10674 / SJ95).